Here is a 134-residue protein sequence, read N- to C-terminus: Small ribosomal subunit protein uS8c (134 aa).

The protein belongs to the universal ribosomal protein uS8 family. In terms of assembly, part of the 30S ribosomal subunit.

It is found in the plastid. It localises to the chloroplast. One of the primary rRNA binding proteins, it binds directly to 16S rRNA central domain where it helps coordinate assembly of the platform of the 30S subunit. The polypeptide is Small ribosomal subunit protein uS8c (rps8) (Nicotiana tabacum (Common tobacco)).